A 343-amino-acid polypeptide reads, in one-letter code: Cathepsin Q (343 aa).

Positions 1–20 (MTPAVFLVILCLGVVPGASA) are cleaved as a signal peptide. The propeptide at 21-124 (LDLSLDVQWQ…FPNSWNWRDA (104 aa)) is activation peptide. 2 disulfides stabilise this stretch: Cys-146–Cys-189 and Cys-180–Cys-222. Residue Cys-149 is part of the active site. Asn-228 is a glycosylation site (N-linked (GlcNAc...) asparagine). Cys-280 and Cys-332 are disulfide-bonded. His-286 is an active-site residue. A glycan (N-linked (GlcNAc...) asparagine) is linked at Asn-298. Residue Asn-310 is part of the active site.

Belongs to the peptidase C1 family. As to expression, highly expressed in placenta.

The protein resides in the lysosome. This Rattus norvegicus (Rat) protein is Cathepsin Q (Ctsq).